Reading from the N-terminus, the 872-residue chain is DNA mismatch repair protein MutS (872 aa).

602–609 (GPNMSGKS) serves as a coordination point for ATP.

Belongs to the DNA mismatch repair MutS family.

Its function is as follows. This protein is involved in the repair of mismatches in DNA. It is possible that it carries out the mismatch recognition step. This protein has a weak ATPase activity. The chain is DNA mismatch repair protein MutS from Staphylococcus aureus (strain bovine RF122 / ET3-1).